Here is an 833-residue protein sequence, read N- to C-terminus: Bifunctional dethiobiotin synthetase/7,8-diamino-pelargonic acid aminotransferase, mitochondrial (833 aa).

The transit peptide at 1–23 (MIPVTATLIRHRLRHLRHRIRFK) directs the protein to the mitochondrion. The tract at residues 36–299 (HPTYLIWSAN…VLVLPPVPKD (264 aa)) is dethiobiotin synthetase. Position 47–52 (47–52 (SLGKTL)) interacts with ATP. Threonine 51 is a Mg(2+) binding site. Threonine 81 is a substrate binding site. Residue aspartate 88 participates in Mg(2+) binding. Residues aspartate 97, 210–213 (ETAG), and 270–271 (ED) each bind ATP. Glutamate 210 provides a ligand contact to Mg(2+). The tract at residues 332 to 830 (RLNGMAKLAG…TKLYKRLGEF (499 aa)) is 7,8-diamino-pelargonic acid aminotransferase. 391–392 (WW) is a (8S)-8-amino-7-oxononanoate binding site. Pyridoxal 5'-phosphate is bound at residue 453–454 (GS). Tyrosine 495 is a (8S)-8-amino-7-oxononanoate binding site. ATP-binding positions include 518-520 (PWY) and glutamate 545. Residue aspartate 637 coordinates pyridoxal 5'-phosphate. Residues lysine 666 and glycine 700 each coordinate (8S)-8-amino-7-oxononanoate. An N6-(pyridoxal phosphate)lysine modification is found at lysine 666. A pyridoxal 5'-phosphate-binding site is contributed by 701-702 (HS). Arginine 797 provides a ligand contact to (8S)-8-amino-7-oxononanoate.

The protein in the N-terminal section; belongs to the dethiobiotin synthetase family. It in the C-terminal section; belongs to the class-III pyridoxal-phosphate-dependent aminotransferase family. BioA subfamily. In terms of assembly, homodimer. It depends on Mg(2+) as a cofactor. Pyridoxal 5'-phosphate serves as cofactor.

It is found in the mitochondrion matrix. It carries out the reaction (7R,8S)-7,8-diammoniononanoate + CO2 + ATP = (4R,5S)-dethiobiotin + ADP + phosphate + 3 H(+). It catalyses the reaction (8S)-8-amino-7-oxononanoate + S-adenosyl-L-methionine = S-adenosyl-4-methylsulfanyl-2-oxobutanoate + (7R,8S)-7,8-diammoniononanoate. The protein operates within cofactor biosynthesis; biotin biosynthesis; biotin from 7,8-diaminononanoate: step 1/2. It functions in the pathway cofactor biosynthesis; biotin biosynthesis; 7,8-diaminononanoate from 8-amino-7-oxononanoate (SAM route): step 1/1. In terms of biological role, bifunctional enzyme that catalyzes two different reactions involved in the biotin biosynthesis. Catalyzes a mechanistically unusual reaction, the ATP-dependent insertion of CO2 between the N7 and N8 nitrogen atoms of 7,8-diaminopelargonic acid (DAPA) to form an ureido ring. Its function is as follows. Catalyzes the transfer of the alpha-amino group from S-adenosyl-L-methionine (SAM) to 7-keto-8-aminopelargonic acid (KAPA) to form 7,8-diaminopelargonic acid (DAPA). It is the only aminotransferase known to utilize SAM as an amino donor. The protein is Bifunctional dethiobiotin synthetase/7,8-diamino-pelargonic acid aminotransferase, mitochondrial of Arabidopsis thaliana (Mouse-ear cress).